The following is a 236-amino-acid chain: tRNA1(Val) (adenine(37)-N6)-methyltransferase (236 aa).

It belongs to the methyltransferase superfamily. tRNA (adenine-N(6)-)-methyltransferase family.

The protein resides in the cytoplasm. The enzyme catalyses adenosine(37) in tRNA1(Val) + S-adenosyl-L-methionine = N(6)-methyladenosine(37) in tRNA1(Val) + S-adenosyl-L-homocysteine + H(+). In terms of biological role, specifically methylates the adenine in position 37 of tRNA(1)(Val) (anticodon cmo5UAC). The polypeptide is tRNA1(Val) (adenine(37)-N6)-methyltransferase (Actinobacillus pleuropneumoniae serotype 5b (strain L20)).